The chain runs to 254 residues: Vitamin B12 import ATP-binding protein BtuD (254 aa).

The ABC transporter domain occupies 3-239 (INYISVGNRL…ENLQQVFETP (237 aa)). 29–36 (GPNGSGKS) is a binding site for ATP.

It belongs to the ABC transporter superfamily. Vitamin B12 importer (TC 3.A.1.13.1) family. The complex is composed of two ATP-binding proteins (BtuD), two transmembrane proteins (BtuC) and a solute-binding protein (BtuF).

It localises to the cell inner membrane. It carries out the reaction an R-cob(III)alamin(out) + ATP + H2O = an R-cob(III)alamin(in) + ADP + phosphate + H(+). Its function is as follows. Part of the ABC transporter complex BtuCDF involved in vitamin B12 import. Responsible for energy coupling to the transport system. This Vibrio vulnificus (strain CMCP6) protein is Vitamin B12 import ATP-binding protein BtuD.